A 139-amino-acid chain; its full sequence is GATA transcription factor 16 (139 aa).

The GATA-type zinc-finger motif lies at 32–86 (NDKKKTCADCGTSKTPLWRGGPVGPKSLCNACGIRNRKKRRGGTEDNKKLKKSSS). Residues 67–98 (NRKKRRGGTEDNKKLKKSSSGGGNRKFGESLK) are disordered.

The protein belongs to the type IV zinc-finger family. Class B subfamily.

It is found in the nucleus. Transcriptional regulator that specifically binds 5'-GATA-3' or 5'-GAT-3' motifs within gene promoters. In Arabidopsis thaliana (Mouse-ear cress), this protein is GATA transcription factor 16 (GATA16).